The following is a 636-amino-acid chain: Leucine-rich repeat and fibronectin type-III domain-containing protein 4 (636 aa).

Positions 1-16 (MAPPLLLLLLASGAAA) are cleaved as a signal peptide. In terms of domain architecture, LRRNT spans 17–48 (CPLPCVCQNLSESLSTLCAHRGLLFVPPNVDR). Topologically, residues 17–518 (CPLPCVCQNL…LQAHVLGGTL (502 aa)) are extracellular. N-linked (GlcNAc...) asparagine glycosylation is present at Asn-25. LRR repeat units lie at residues 49 to 70 (RTVE…DFRN), 73 to 94 (GLVD…SFGD), 97 to 118 (SLRS…SLRG), 121 to 142 (NLQH…AFDD), 146 to 169 (SLED…GSMP), 170 to 191 (ALHT…VFAQ), and 194 to 215 (QLSR…PLFS). Positions 234–280 (NPLHCNCELLWLRRLARPDDLETCASPPTLAGRYFWAVPEGEFSCEP) constitute an LRRCT domain. Positions 281–367 (PLIARHTQRL…GEATARVELR (87 aa)) constitute an Ig-like domain. The cysteines at positions 302 and 351 are disulfide-linked. Asn-333 carries an N-linked (GlcNAc...) asparagine glycan. The 98-residue stretch at 405–502 (SEPAVQVTEV…GCAHFSTLPA (98 aa)) folds into the Fibronectin type-III domain. The chain crosses the membrane as a helical span at residues 519-539 (TVAVGGVLVAALLVFTVALLV). Over 540-636 (RGRGAGNGRL…SAERLEESVV (97 aa)) the chain is Cytoplasmic. The segment at 556–585 (VQSQTNGGTSPMPKSHPPRSPPPRPQRSCS) is disordered. The segment covering 569–580 (KSHPPRSPPPRP) has biased composition (pro residues). A phosphoserine mark is found at Ser-585 and Ser-627. Residues 633–636 (ESVV) carry the PDZ-binding motif.

It belongs to the LRFN family. As to quaternary structure, forms heteromeric complexes with LRFN1 and LRFN2. Can form heteromeric complexes with LRFN3 and LRFN5. Unable to form homophilic interactions across cell junctions. Interacts with DLG1, DLG2, DLG3 and DLG4. In terms of processing, glycosylated.

It is found in the membrane. In terms of biological role, promotes neurite outgrowth in hippocampal neurons. May play a role in redistributing DLG4 to the cell periphery. This Rattus norvegicus (Rat) protein is Leucine-rich repeat and fibronectin type-III domain-containing protein 4 (Lrfn4).